A 190-amino-acid chain; its full sequence is Translation initiation factor IF-3 (190 aa).

This sequence belongs to the IF-3 family. In terms of assembly, monomer.

Its subcellular location is the cytoplasm. Functionally, IF-3 binds to the 30S ribosomal subunit and shifts the equilibrium between 70S ribosomes and their 50S and 30S subunits in favor of the free subunits, thus enhancing the availability of 30S subunits on which protein synthesis initiation begins. This Prochlorococcus marinus subsp. pastoris (strain CCMP1986 / NIES-2087 / MED4) protein is Translation initiation factor IF-3.